The chain runs to 308 residues: Ribosomal protein uL3 glutamine methyltransferase (308 aa).

The protein belongs to the protein N5-glutamine methyltransferase family. PrmB subfamily.

It carries out the reaction L-glutaminyl-[ribosomal protein uL3] + S-adenosyl-L-methionine = N(5)-methyl-L-glutaminyl-[ribosomal protein uL3] + S-adenosyl-L-homocysteine + H(+). Its function is as follows. Methylates large ribosomal subunit protein uL3 on a specific glutamine residue. This chain is Ribosomal protein uL3 glutamine methyltransferase, found in Xanthomonas campestris pv. campestris (strain ATCC 33913 / DSM 3586 / NCPPB 528 / LMG 568 / P 25).